A 215-amino-acid chain; its full sequence is MFITFEGLDGSGKTTIVQKLVEKLLEKKPALSFIVTREPGGKNVRESEKIRELILDKESRLSPISEALLYTASRRIHIEKVILPALKENKLVLCDRYIDSFYAYQGIVRGLGLSFAKQLTEMVIESTIPDITIFIDITAEQSEYRRNVSRLISDRLDSESLEFHKKVFDAYKEVINLDPKRFIIVNGLQSIPEILDEIVEKLFQNKKFDEWWKNN.

7 to 14 is a binding site for ATP; it reads GLDGSGKT.

The protein belongs to the thymidylate kinase family.

The catalysed reaction is dTMP + ATP = dTDP + ADP. Phosphorylation of dTMP to form dTDP in both de novo and salvage pathways of dTTP synthesis. This Mycoplasmopsis agalactiae (strain NCTC 10123 / CIP 59.7 / PG2) (Mycoplasma agalactiae) protein is Thymidylate kinase.